A 505-amino-acid chain; its full sequence is Maturase K (505 aa).

This sequence belongs to the intron maturase 2 family. MatK subfamily.

Its subcellular location is the plastid. It is found in the chloroplast. Usually encoded in the trnK tRNA gene intron. Probably assists in splicing its own and other chloroplast group II introns. The chain is Maturase K from Apocynum androsaemifolium (Spreading dogbane).